Reading from the N-terminus, the 452-residue chain is Pup--protein ligase (452 aa).

Glu-9 contributes to the Mg(2+) binding site. Arg-53 lines the ATP pocket. Position 55 (Tyr-55) interacts with Mg(2+). Residue Asp-57 is the Proton acceptor of the active site. Glu-63 is a Mg(2+) binding site. Thr-66 and Trp-419 together coordinate ATP.

Belongs to the Pup ligase/Pup deamidase family. Pup-conjugating enzyme subfamily.

It catalyses the reaction ATP + [prokaryotic ubiquitin-like protein]-L-glutamate + [protein]-L-lysine = ADP + phosphate + N(6)-([prokaryotic ubiquitin-like protein]-gamma-L-glutamyl)-[protein]-L-lysine.. The protein operates within protein degradation; proteasomal Pup-dependent pathway. It functions in the pathway protein modification; protein pupylation. Catalyzes the covalent attachment of the prokaryotic ubiquitin-like protein modifier Pup to the proteasomal substrate proteins, thereby targeting them for proteasomal degradation. This tagging system is termed pupylation. The ligation reaction involves the side-chain carboxylate of the C-terminal glutamate of Pup and the side-chain amino group of a substrate lysine. This Nocardia farcinica (strain IFM 10152) protein is Pup--protein ligase.